A 242-amino-acid polypeptide reads, in one-letter code: Type III pantothenate kinase (242 aa).

ATP is bound at residue 7 to 14; it reads DLGNSRFK. Substrate-binding positions include tyrosine 91 and 98–101; that span reads GVDR. The active-site Proton acceptor is the aspartate 100. Threonine 121 contacts ATP. Threonine 171 lines the substrate pocket.

The protein belongs to the type III pantothenate kinase family. Homodimer. Requires NH4(+) as cofactor. The cofactor is K(+).

The protein localises to the cytoplasm. The enzyme catalyses (R)-pantothenate + ATP = (R)-4'-phosphopantothenate + ADP + H(+). It functions in the pathway cofactor biosynthesis; coenzyme A biosynthesis; CoA from (R)-pantothenate: step 1/5. Functionally, catalyzes the phosphorylation of pantothenate (Pan), the first step in CoA biosynthesis. This chain is Type III pantothenate kinase, found in Xanthomonas campestris pv. campestris (strain B100).